A 276-amino-acid chain; its full sequence is NH(3)-dependent NAD(+) synthetase (276 aa).

43-50 is an ATP binding site; it reads GISGGVDS. A Mg(2+)-binding site is contributed by Asp49. Residue Arg146 participates in deamido-NAD(+) binding. Thr166 serves as a coordination point for ATP. Glu171 contributes to the Mg(2+) binding site. The deamido-NAD(+) site is built by Lys179 and Asp186. Positions 195 and 217 each coordinate ATP. 266–267 is a binding site for deamido-NAD(+); the sequence is HK.

This sequence belongs to the NAD synthetase family. In terms of assembly, homodimer.

The catalysed reaction is deamido-NAD(+) + NH4(+) + ATP = AMP + diphosphate + NAD(+) + H(+). Its pathway is cofactor biosynthesis; NAD(+) biosynthesis; NAD(+) from deamido-NAD(+) (ammonia route): step 1/1. Its function is as follows. Catalyzes the ATP-dependent amidation of deamido-NAD to form NAD. Uses ammonia as a nitrogen source. This Shewanella baltica (strain OS223) protein is NH(3)-dependent NAD(+) synthetase.